The sequence spans 179 residues: Large ribosomal subunit protein uL5 (179 aa).

It belongs to the universal ribosomal protein uL5 family. Part of the 50S ribosomal subunit; part of the 5S rRNA/L5/L18/L25 subcomplex. Contacts the 5S rRNA and the P site tRNA. Forms a bridge to the 30S subunit in the 70S ribosome.

This is one of the proteins that bind and probably mediate the attachment of the 5S RNA into the large ribosomal subunit, where it forms part of the central protuberance. In the 70S ribosome it contacts protein S13 of the 30S subunit (bridge B1b), connecting the 2 subunits; this bridge is implicated in subunit movement. Contacts the P site tRNA; the 5S rRNA and some of its associated proteins might help stabilize positioning of ribosome-bound tRNAs. The sequence is that of Large ribosomal subunit protein uL5 from Prochlorococcus marinus (strain MIT 9313).